Reading from the N-terminus, the 114-residue chain is Ribonuclease P protein component (114 aa).

It belongs to the RnpA family. As to quaternary structure, consists of a catalytic RNA component (M1 or rnpB) and a protein subunit.

It carries out the reaction Endonucleolytic cleavage of RNA, removing 5'-extranucleotides from tRNA precursor.. Functionally, RNaseP catalyzes the removal of the 5'-leader sequence from pre-tRNA to produce the mature 5'-terminus. It can also cleave other RNA substrates such as 4.5S RNA. The protein component plays an auxiliary but essential role in vivo by binding to the 5'-leader sequence and broadening the substrate specificity of the ribozyme. The sequence is that of Ribonuclease P protein component from Borrelia duttonii (strain Ly).